The chain runs to 333 residues: UPF0285 protein MTH_1441 (333 aa).

Belongs to the UPF0285 family.

This Methanothermobacter thermautotrophicus (strain ATCC 29096 / DSM 1053 / JCM 10044 / NBRC 100330 / Delta H) (Methanobacterium thermoautotrophicum) protein is UPF0285 protein MTH_1441.